Here is an 843-residue protein sequence, read N- to C-terminus: Alpha-L-fucosidase 2 (843 aa).

Residues 1–27 (MAEKSSFFVHFSCLLLLLTIIITCGEG) form the signal peptide. Residues Asn62, Asn253, Asn365, and Asn605 are each glycosylated (N-linked (GlcNAc...) asparagine).

Belongs to the glycosyl hydrolase 95 family. In terms of tissue distribution, ubiquitous. Highest expression in vascular tissues, leaf trichomes, root elongation zone and emerging lateral roots.

It is found in the secreted. The protein resides in the extracellular space. It localises to the apoplast. It carries out the reaction an alpha-L-fucoside + H2O = L-fucose + an alcohol. Hydrolyzes alpha-1,2-linked fucose. Also active on fucosylated xyloglucan oligosaccharides. No activity with 3-fucosyllactose, p-nitrophenyl-alpha-I-fucopyranoside, lacto-N-fucopentaose II, lacto-N-fucopentaose III or alpha 1,6-fucosylated chitopentaose. Involved in apoplastic xyloglucan metabolism. The polypeptide is Alpha-L-fucosidase 2 (FUC95A) (Arabidopsis thaliana (Mouse-ear cress)).